We begin with the raw amino-acid sequence, 240 residues long: MORN repeat-containing protein 3 (240 aa).

Positions 6-35 (CPKKSESLWKGWDRKAQRNGLRSQVYAVNG) are interaction with MDM2. 7 MORN repeats span residues 38-60 (YVGE…KKGA), 62-84 (YEGD…DQQT), 91-113 (YSGW…PKEY), 114-136 (YEGD…NGDI), 137-159 (YEGQ…NGNR), 160-182 (YEGC…DHGQ), and 184-205 (FEGF…GRDE). Residues 76-100 (TLSLPDQQTGKCRRVYSGWWKGDKK) form an interaction with SIRT1 region. The tract at residues 206 to 240 (APEPTQFPIPEVKILDPDGVLAEALAMFRKTEEGD) is interaction with TP53.

In terms of assembly, interacts with MEIG1. Interacts with TP53, MDM2 and SIRT1; the interactions mediate post-transcriptional modifications of TP53 by MDM2 and SIRT1.

The protein resides in the cytoplasmic vesicle. The protein localises to the secretory vesicle. It localises to the acrosome. Assembles a suppression complex (suppresome) by tethering SIRT1 and MDM2 to regulate composite modifications of p53/TP53. Confers both deacetylation-mediated functional inactivation, by SIRT1, and ubiquitination-dependent degradation, by MDM2, of p53/TP53, promoting a proliferative and cell survival behaviors. May play a role in the regulation of spermatogenesis. This Homo sapiens (Human) protein is MORN repeat-containing protein 3.